Here is a 136-residue protein sequence, read N- to C-terminus: Holo-[acyl-carrier-protein] synthase (136 aa).

Mg(2+) is bound by residues aspartate 8 and glutamate 62.

The protein belongs to the P-Pant transferase superfamily. AcpS family. Mg(2+) serves as cofactor.

Its subcellular location is the cytoplasm. The catalysed reaction is apo-[ACP] + CoA = holo-[ACP] + adenosine 3',5'-bisphosphate + H(+). Its function is as follows. Transfers the 4'-phosphopantetheine moiety from coenzyme A to a Ser of acyl-carrier-protein. This is Holo-[acyl-carrier-protein] synthase from Polynucleobacter necessarius subsp. necessarius (strain STIR1).